The chain runs to 1020 residues: Sodium/potassium-transporting ATPase subunit alpha-2 (1020 aa).

The propeptide occupies 1–5 (MGRGA). Positions 1 to 31 (MGRGAGREYSPAATTAENGGGKKKQKEKELD) are disordered. Residues 6–85 (GREYSPAATT…NALTPPPTTP (80 aa)) are Cytoplasmic-facing. Phosphoserine is present on serine 10. The interaction with phosphoinositide-3 kinase stretch occupies residues 80–82 (PPP). A helical membrane pass occupies residues 86–106 (EWVKFCRQLFGGFSILLWIGA). Residues 107–129 (ILCFLAYGIQAAMEDEPSNDNLY) are Extracellular-facing. A helical membrane pass occupies residues 130-150 (LGVVLAAVVIVTGCFSYYQEA). At 151–286 (KSSKIMDSFK…VGRTPIAMEI (136 aa)) the chain is on the cytoplasmic side. Polar residues predominate over residues 212 to 227 (DNSSLTGESEPQTRSP). The segment at 212–231 (DNSSLTGESEPQTRSPEFTH) is disordered. The chain crosses the membrane as a helical span at residues 287–306 (EHFIQLITGVAVFLGVSFFV). Residues 307–318 (LSLILGYSWLEA) are Extracellular-facing. The helical transmembrane segment at 319-336 (VIFLIGIIVANVPEGLLA) threads the bilayer. The Cytoplasmic portion of the chain corresponds to 337 to 769 (TVTVCLTLTA…EEGRLIFDNL (433 aa)). The active-site 4-aspartylphosphate intermediate is aspartate 374. Residues serine 439, serine 450, serine 496, and serine 559 each carry the phosphoserine modification. A Phosphothreonine modification is found at threonine 570. Phosphoserine occurs at positions 587 and 672. Positions 714 and 718 each coordinate Mg(2+). The chain crosses the membrane as a helical span at residues 770 to 789 (KKSIAYTLTSNIPEITPFLL). Over 790 to 799 (FIIANIPLPL) the chain is Extracellular. The chain crosses the membrane as a helical span at residues 800–820 (GTVTILCIDLGTDMVPAISLA). Over 821 to 840 (YEAAESDIMKRQPRNSQTDK) the chain is Cytoplasmic. At serine 826 the chain carries Phosphoserine. A helical transmembrane segment spans residues 841–863 (LVNERLISMAYGQIGMIQALGGF). Topologically, residues 864-915 (FTYFVILAENGFLPSRLLGIRLDWDDRTMNDLEDSYGQEWTYEQRKVVEFTC) are extracellular. A helical transmembrane segment spans residues 916–935 (HTAFFASIVVVQWADLIICK). At 936–948 (TRRNSVFQQGMKN) the chain is on the cytoplasmic side. Serine 940 bears the Phosphoserine; by PKA mark. The helical transmembrane segment at 949–967 (KILIFGLLEETALAAFLSY) threads the bilayer. Residues 968 to 982 (CPGMGVALRMYPLKV) are Extracellular-facing. A helical transmembrane segment spans residues 983-1003 (TWWFCAFPYSLLIFIYDEVRK). Residues 1004-1020 (LILRRYPGGWVEKETYY) are Cytoplasmic-facing.

This sequence belongs to the cation transport ATPase (P-type) (TC 3.A.3) family. Type IIC subfamily. In terms of assembly, the sodium/potassium-transporting ATPase is composed of a catalytic alpha subunit, an auxiliary non-catalytic beta subunit and an additional regulatory subunit. Interacts with regulatory subunit FXYD1.

It is found in the membrane. Its subcellular location is the cell membrane. It catalyses the reaction K(+)(out) + Na(+)(in) + ATP + H2O = K(+)(in) + Na(+)(out) + ADP + phosphate + H(+). This is the catalytic component of the active enzyme, which catalyzes the hydrolysis of ATP coupled with the exchange of sodium and potassium ions across the plasma membrane. This action creates the electrochemical gradient of sodium and potassium, providing the energy for active transport of various nutrients. The polypeptide is Sodium/potassium-transporting ATPase subunit alpha-2 (ATP1A2) (Homo sapiens (Human)).